A 250-amino-acid chain; its full sequence is Uracil-DNA glycosylase (250 aa).

The Proton acceptor role is filled by Asp-78. The interval 228 to 250 (RGQKPVDWSGEQNNASRQGEFAL) is disordered.

Belongs to the uracil-DNA glycosylase (UDG) superfamily. UNG family.

It localises to the cytoplasm. It catalyses the reaction Hydrolyzes single-stranded DNA or mismatched double-stranded DNA and polynucleotides, releasing free uracil.. Functionally, excises uracil residues from the DNA which can arise as a result of misincorporation of dUMP residues by DNA polymerase or due to deamination of cytosine. This Bordetella parapertussis (strain 12822 / ATCC BAA-587 / NCTC 13253) protein is Uracil-DNA glycosylase.